Here is a 455-residue protein sequence, read N- to C-terminus: Bifunctional protein GlmU (455 aa).

The interval methionine 1–arginine 227 is pyrophosphorylase. UDP-N-acetyl-alpha-D-glucosamine-binding positions include leucine 8–glycine 11, lysine 22, glutamine 73, glycine 78–threonine 79, tyrosine 100–aspartate 102, glycine 137, glutamate 152, asparagine 167, and asparagine 225. Residue aspartate 102 participates in Mg(2+) binding. Position 225 (asparagine 225) interacts with Mg(2+). The linker stretch occupies residues tryptophan 228–alanine 248. Residues glycine 249–glutamate 455 form an N-acetyltransferase region. UDP-N-acetyl-alpha-D-glucosamine is bound by residues arginine 332 and lysine 350. The active-site Proton acceptor is histidine 362. Positions 365 and 376 each coordinate UDP-N-acetyl-alpha-D-glucosamine. Acetyl-CoA contacts are provided by residues alanine 379, asparagine 385–tyrosine 386, serine 404, alanine 422, and arginine 439.

In the N-terminal section; belongs to the N-acetylglucosamine-1-phosphate uridyltransferase family. The protein in the C-terminal section; belongs to the transferase hexapeptide repeat family. As to quaternary structure, homotrimer. Requires Mg(2+) as cofactor.

It is found in the cytoplasm. The catalysed reaction is alpha-D-glucosamine 1-phosphate + acetyl-CoA = N-acetyl-alpha-D-glucosamine 1-phosphate + CoA + H(+). It carries out the reaction N-acetyl-alpha-D-glucosamine 1-phosphate + UTP + H(+) = UDP-N-acetyl-alpha-D-glucosamine + diphosphate. Its pathway is nucleotide-sugar biosynthesis; UDP-N-acetyl-alpha-D-glucosamine biosynthesis; N-acetyl-alpha-D-glucosamine 1-phosphate from alpha-D-glucosamine 6-phosphate (route II): step 2/2. It functions in the pathway nucleotide-sugar biosynthesis; UDP-N-acetyl-alpha-D-glucosamine biosynthesis; UDP-N-acetyl-alpha-D-glucosamine from N-acetyl-alpha-D-glucosamine 1-phosphate: step 1/1. It participates in bacterial outer membrane biogenesis; LPS lipid A biosynthesis. In terms of biological role, catalyzes the last two sequential reactions in the de novo biosynthetic pathway for UDP-N-acetylglucosamine (UDP-GlcNAc). The C-terminal domain catalyzes the transfer of acetyl group from acetyl coenzyme A to glucosamine-1-phosphate (GlcN-1-P) to produce N-acetylglucosamine-1-phosphate (GlcNAc-1-P), which is converted into UDP-GlcNAc by the transfer of uridine 5-monophosphate (from uridine 5-triphosphate), a reaction catalyzed by the N-terminal domain. This Coxiella burnetii (strain Dugway 5J108-111) protein is Bifunctional protein GlmU.